We begin with the raw amino-acid sequence, 315 residues long: Ankyrin repeat domain-containing protein SOWAHD (315 aa).

A disordered region spans residues 1-39 (MAQLGGAANRAPTASLAPTSQSLRCAPQPRPSRADTGSL). ANK repeat units follow at residues 112–141 (PREH…ELLL), 147–162 (TGYS…GRHE), and 186–216 (GGLT…DATR).

Belongs to the SOWAH family.

The protein is Ankyrin repeat domain-containing protein SOWAHD (SOWAHD) of Homo sapiens (Human).